We begin with the raw amino-acid sequence, 325 residues long: Siroheme decarboxylase NirDL subunit (325 aa).

Belongs to the Ahb/Nir family. In terms of assembly, forms a complex composed of NirDL, NirG and NirH. All proteins are required for the total conversion of siroheme to didecarboxysiroheme.

It catalyses the reaction siroheme + 2 H(+) = 12,18-didecarboxysiroheme + 2 CO2. It participates in porphyrin-containing compound metabolism. Functionally, involved in heme d1 biosynthesis. Catalyzes the decarboxylation of siroheme into didecarboxysiroheme. In Paracoccus denitrificans (strain Pd 1222), this protein is Siroheme decarboxylase NirDL subunit.